A 535-amino-acid polypeptide reads, in one-letter code: Cytochrome P450 monooxygenase claP (535 aa).

Transmembrane regions (helical) follow at residues Ile-7–Gly-27 and Tyr-225–Thr-245. Cys-472 provides a ligand contact to heme.

It belongs to the cytochrome P450 family. Heme serves as cofactor.

The protein localises to the membrane. Its pathway is secondary metabolite biosynthesis; terpenoid biosynthesis. Its function is as follows. Cytochrome P450 monooxygenase; part of the gene cluster that mediates the biosynthesis of clavilactone A, a meroterpenoid that features a unique benzo-fused ten-membered carbocyclic ring unit with an alpha,beta-epoxy-gamma-lactone moiety, forming an intriguing 10/5/3 tricyclic nested skeleton. Cytochrome P450 monooxygenases claO, claP, claQ, claU, and claW are close orthologs, suggesting that a redundant function or pseudogenes are present in the cla cluster. These monoxygenases are not involved in clavilactone A biosynthesis nor its modification. ClaR, ClaS and ClaT are sufficient to produce clavilactone A. The biosynthesis begins with the prenyltransferase claS that transfers geranyl pyrophosphate (GPP) to hydroquinone to produces geranylhydroquinone. The cytochrome P450 monooxygenase claR then catalyzes the diradical coupling reaction between the intramolecular hydroquinone and allyl moieties to form the benzo-fused ten-membered carbocyclic ring unit of wigantol. Finally the cytochrome P450 monooxygenase claT exquisitely and stereoselectively assembles the alpha,beta-epoxy-gamma-lactone moiety, producing clavilactone A via arnebinol A. The protein is Cytochrome P450 monooxygenase claP of Ampulloclitocybe clavipes (Club foot).